Here is a 507-residue protein sequence, read N- to C-terminus: UDP-N-acetylglucosamine 1-carboxyvinyltransferase 1 (507 aa).

Residue 41–42 (KN) coordinates phosphoenolpyruvate. Position 112 (Arg-112) interacts with UDP-N-acetyl-alpha-D-glucosamine. The Proton donor role is filled by Cys-136. A 2-(S-cysteinyl)pyruvic acid O-phosphothioketal modification is found at Cys-136. Residues 141–145 (RPIDL), Asp-328, and Leu-350 each bind UDP-N-acetyl-alpha-D-glucosamine.

This sequence belongs to the EPSP synthase family. MurA subfamily.

The protein resides in the cytoplasm. The catalysed reaction is phosphoenolpyruvate + UDP-N-acetyl-alpha-D-glucosamine = UDP-N-acetyl-3-O-(1-carboxyvinyl)-alpha-D-glucosamine + phosphate. Its pathway is cell wall biogenesis; peptidoglycan biosynthesis. Its function is as follows. Cell wall formation. Adds enolpyruvyl to UDP-N-acetylglucosamine. The polypeptide is UDP-N-acetylglucosamine 1-carboxyvinyltransferase 1 (Legionella pneumophila (strain Lens)).